Here is a 255-residue protein sequence, read N- to C-terminus: Menaquinone reductase, iron-sulfur cluster-binding subunit (255 aa).

3 4Fe-4S ferredoxin-type domains span residues 11-41 (WGMV…PQPD), 66-97 (HDVA…KNEE), and 99-128 (GIVS…FNWF). The [4Fe-4S] cluster site is built by C20, C23, C26, C30, C75, C78, C83, C87, C108, C111, C114, and C118. The [3Fe-4S] cluster site is built by C155, C158, C188, and C192.

As to quaternary structure, the Qrc complex is composed of four subunits: QrcA, QrcB, QrcC and QrcD. Can form a supercomplex with the [NiFe] hydrogenase HynA1 and the tetraheme Type I cytochrome c3 TpIc(3), its physiological electron donors. Requires [4Fe-4S] cluster as cofactor. [3Fe-4S] cluster serves as cofactor.

It is found in the periplasm. Its function is as follows. Component of the respiratory Qrc complex, that catalyzes the reduction of the menaquinone pool using electrons transferred from the reduced periplasmic cytochrome c3, and which is probably involved in sulfate respiration. Is likely essential for growth on H(2) or formate since the periplasmic hydrogenases and/or formate dehydrogenases act as primary electron donors for the Qrc complex. QrcC is an electron-transferring subunit; its cubane iron sulfur clusters form a pathway for electron transfer between the hemes of QrcA and the membrane quinone pool. This chain is Menaquinone reductase, iron-sulfur cluster-binding subunit, found in Nitratidesulfovibrio vulgaris (strain ATCC 29579 / DSM 644 / CCUG 34227 / NCIMB 8303 / VKM B-1760 / Hildenborough) (Desulfovibrio vulgaris).